A 500-amino-acid chain; its full sequence is Lysine--tRNA ligase (500 aa).

Mg(2+)-binding residues include Glu-410 and Glu-417.

The protein belongs to the class-II aminoacyl-tRNA synthetase family. As to quaternary structure, homodimer. The cofactor is Mg(2+).

The protein localises to the cytoplasm. It catalyses the reaction tRNA(Lys) + L-lysine + ATP = L-lysyl-tRNA(Lys) + AMP + diphosphate. This Pseudomonas putida (strain W619) protein is Lysine--tRNA ligase.